The sequence spans 499 residues: 2,3-bisphosphoglycerate-independent phosphoglycerate mutase (499 aa).

Mn(2+) contacts are provided by Asp-10 and Ser-60. Ser-60 serves as the catalytic Phosphoserine intermediate. Substrate-binding positions include His-121, 151-152, Arg-182, Arg-188, 253-256, and Lys-326; these read RD and RPDR. Residues Asp-391, His-395, Asp-434, His-435, and His-452 each coordinate Mn(2+).

Belongs to the BPG-independent phosphoglycerate mutase family. Monomer. Requires Mn(2+) as cofactor.

The catalysed reaction is (2R)-2-phosphoglycerate = (2R)-3-phosphoglycerate. It participates in carbohydrate degradation; glycolysis; pyruvate from D-glyceraldehyde 3-phosphate: step 3/5. In terms of biological role, catalyzes the interconversion of 2-phosphoglycerate and 3-phosphoglycerate. The protein is 2,3-bisphosphoglycerate-independent phosphoglycerate mutase of Metamycoplasma hominis (strain ATCC 23114 / DSM 25592 / NBRC 14850 / NCTC 10111 / PG21) (Mycoplasma hominis).